A 504-amino-acid polypeptide reads, in one-letter code: Fumitremorgin C monooxygenase (504 aa).

Residues 12–32 form a helical membrane-spanning segment; sequence LGVVGASLIVILGIILLFPLG. Position 442 (cysteine 442) interacts with heme.

This sequence belongs to the cytochrome P450 family. The cofactor is heme.

The protein resides in the membrane. It catalyses the reaction fumitremorgin C + 2 reduced [NADPH--hemoprotein reductase] + 2 O2 = 12alpha,13alpha-dihydroxyfumitremorgin C + 2 oxidized [NADPH--hemoprotein reductase] + 2 H2O + 2 H(+). The protein operates within mycotoxin biosynthesis. Its function is as follows. Cytochrome P450 monooxygenase; part of the gene cluster that mediates the biosynthesis of fumitremorgins, indole alkaloids that carry not only intriguing chemical structures, but also interesting biological and pharmacological activities. The biosynthesis of fumitremorgin-type alkaloids begins by condensation of the two amino acids L-tryptophan and L-proline to brevianamide F, catalyzed by the non-ribosomal peptide synthetase ftmA. Brevianamide F is then prenylated by the prenyltransferase ftmPT1/ftmB in the presence of dimethylallyl diphosphate, resulting in the formation of tryprostatin B. The three cytochrome P450 monooxygenases, ftmP450-1/ftmC, ftmP450-2/ftmE and ftmP450-3/FtmG, are responsible for the conversion of tryprostatin B to 6-hydroxytryprostatin B, tryprostatin A to fumitremorgin C and fumitremorgin C to 12,13-dihydroxyfumitremorgin C, respectively. The putative methyltransferase ftmMT/ftmD is expected for the conversion of 6-hydroxytryprostatin B to tryprostatin A. FtmPT2/FtmH catalyzes the prenylation of 12,13-dihydroxyfumitre-morgin C in the presence of dimethylallyl diphosphate, resulting in the formation of fumitremorgin B. Fumitremorgin B is further converted to verruculogen by ftmOx1/ftmF via the insertion of an endoperoxide bond between the two prenyl moieties. In some fungal species, verruculogen is further converted to fumitremorgin A, but the enzymes involved in this step have not been identified yet. The protein is Fumitremorgin C monooxygenase of Aspergillus fumigatus (Neosartorya fumigata).